We begin with the raw amino-acid sequence, 297 residues long: Myozenin-1 (297 aa).

Residues 1–34 (MPLSGTPAPNKKRKSSKLIMELTGGGQESSGLNL) form a disordered region. Ser-82 is subject to Phosphoserine. Residues 105–172 (FSYSKSSGGG…ALPDNQAGGE (68 aa)) form a disordered region. Residues 118–128 (RSGSAGQYGSD) are compositionally biased toward low complexity. Over residues 136-162 (SGSGSGSGSGPGSGGAGGPGGHSGRGG) the composition is skewed to gly residues.

The protein belongs to the myozenin family. As to quaternary structure, interacts with ACTN2, ACTN3, FLNA, FLNB, FLNC, LDB3, PPP3CA and TCAP. Interacts via its C-terminal region with MYOT.

The protein localises to the nucleus. It is found in the cell projection. Its subcellular location is the pseudopodium. Functionally, myozenins may serve as intracellular binding proteins involved in linking Z-disk proteins such as alpha-actinin, gamma-filamin, TCAP/telethonin, LDB3/ZASP and localizing calcineurin signaling to the sarcomere. Plays an important role in the modulation of calcineurin signaling. May play a role in myofibrillogenesis. The chain is Myozenin-1 (MYOZ1) from Bos taurus (Bovine).